The following is a 294-amino-acid chain: 4-hydroxy-tetrahydrodipicolinate synthase (294 aa).

T45 contributes to the pyruvate binding site. Catalysis depends on Y133, which acts as the Proton donor/acceptor. Residue K162 is the Schiff-base intermediate with substrate of the active site. I204 serves as a coordination point for pyruvate.

The protein belongs to the DapA family. As to quaternary structure, homotetramer; dimer of dimers.

Its subcellular location is the cytoplasm. The catalysed reaction is L-aspartate 4-semialdehyde + pyruvate = (2S,4S)-4-hydroxy-2,3,4,5-tetrahydrodipicolinate + H2O + H(+). It participates in amino-acid biosynthesis; L-lysine biosynthesis via DAP pathway; (S)-tetrahydrodipicolinate from L-aspartate: step 3/4. Functionally, catalyzes the condensation of (S)-aspartate-beta-semialdehyde [(S)-ASA] and pyruvate to 4-hydroxy-tetrahydrodipicolinate (HTPA). This is 4-hydroxy-tetrahydrodipicolinate synthase from Rhizobium meliloti (strain 1021) (Ensifer meliloti).